A 64-amino-acid chain; its full sequence is Ferredoxin-2 (64 aa).

2 4Fe-4S ferredoxin-type domains span residues 3 to 31 (KYLYLDQDECMACESCVELCPEAFRMSSA) and 34 to 64 (YAEVIDPNTTAECVEDAISTCPVECIEWREE). [4Fe-4S] cluster contacts are provided by cysteine 12, cysteine 15, cysteine 18, and cysteine 54.

Homodimer. Requires [4Fe-4S] cluster as cofactor.

In terms of biological role, ferredoxins are iron-sulfur proteins that transfer electrons in a wide variety of metabolic reactions. The chain is Ferredoxin-2 from Nitratidesulfovibrio vulgaris (strain DSM 19637 / Miyazaki F) (Desulfovibrio vulgaris).